The following is a 403-amino-acid chain: Arginine biosynthesis bifunctional protein ArgJ (403 aa).

The substrate site is built by T149, K175, T186, E272, N398, and T403. Residue T186 is the Nucleophile of the active site.

Belongs to the ArgJ family. In terms of assembly, heterotetramer of two alpha and two beta chains.

The protein localises to the cytoplasm. The enzyme catalyses N(2)-acetyl-L-ornithine + L-glutamate = N-acetyl-L-glutamate + L-ornithine. It carries out the reaction L-glutamate + acetyl-CoA = N-acetyl-L-glutamate + CoA + H(+). It functions in the pathway amino-acid biosynthesis; L-arginine biosynthesis; L-ornithine and N-acetyl-L-glutamate from L-glutamate and N(2)-acetyl-L-ornithine (cyclic): step 1/1. It participates in amino-acid biosynthesis; L-arginine biosynthesis; N(2)-acetyl-L-ornithine from L-glutamate: step 1/4. Catalyzes two activities which are involved in the cyclic version of arginine biosynthesis: the synthesis of N-acetylglutamate from glutamate and acetyl-CoA as the acetyl donor, and of ornithine by transacetylation between N(2)-acetylornithine and glutamate. This chain is Arginine biosynthesis bifunctional protein ArgJ, found in Caldanaerobacter subterraneus subsp. tengcongensis (strain DSM 15242 / JCM 11007 / NBRC 100824 / MB4) (Thermoanaerobacter tengcongensis).